The sequence spans 445 residues: Phosphoglucosamine mutase (445 aa).

The active-site Phosphoserine intermediate is Ser102. Mg(2+)-binding residues include Ser102, Asp241, Asp243, and Asp245. Ser102 is subject to Phosphoserine.

It belongs to the phosphohexose mutase family. It depends on Mg(2+) as a cofactor. Post-translationally, activated by phosphorylation.

The catalysed reaction is alpha-D-glucosamine 1-phosphate = D-glucosamine 6-phosphate. In terms of biological role, catalyzes the conversion of glucosamine-6-phosphate to glucosamine-1-phosphate. This chain is Phosphoglucosamine mutase, found in Photorhabdus laumondii subsp. laumondii (strain DSM 15139 / CIP 105565 / TT01) (Photorhabdus luminescens subsp. laumondii).